A 468-amino-acid polypeptide reads, in one-letter code: Cytochrome bd ubiquinol oxidase subunit 1 (468 aa).

The next 9 helical transmembrane spans lie at 15–35 (TLFHFLFVPMSIGLVFMVALM), 51–71 (AKFWGHLFLINFAVGVVTGIL), 95–115 (LAIEALLAFFMESIFIGLWIF), 124–144 (IHALCIWLVSFGTIMSSFWIL), 177–197 (LWVEFPHVIFGALATGAFFIA), 219–239 (LAMIVGLCAGLGVGLSGHMQA), 331–351 (FRIMVGAGVVMILAALGGLWL), 366–386 (IMIALISFPFLANSAGWIMTE), and 416–436 (SIIAFGVMYMILGALLVFLFI). Histidine 18 is a binding site for heme b. Residue histidine 183 coordinates heme b. A heme b-binding site is contributed by methionine 334. The interval 448 to 468 (HHDVPVSTDPFSQEVYHGISS) is disordered.

Belongs to the cytochrome ubiquinol oxidase subunit 1 family. Heterodimer of subunits I and II. Heme b is required as a cofactor. The cofactor is heme d cis-diol.

The protein resides in the cell membrane. The catalysed reaction is 2 a ubiquinol + O2(in) + 4 H(+)(in) = 2 a ubiquinone + 2 H2O(in) + 4 H(+)(out). The protein is Cytochrome bd ubiquinol oxidase subunit 1 (cydA) of Bacillus subtilis (strain 168).